Consider the following 345-residue polypeptide: S-adenosylmethionine:tRNA ribosyltransferase-isomerase (345 aa).

The protein belongs to the QueA family. Monomer.

The protein resides in the cytoplasm. The enzyme catalyses 7-aminomethyl-7-carbaguanosine(34) in tRNA + S-adenosyl-L-methionine = epoxyqueuosine(34) in tRNA + adenine + L-methionine + 2 H(+). Its pathway is tRNA modification; tRNA-queuosine biosynthesis. Transfers and isomerizes the ribose moiety from AdoMet to the 7-aminomethyl group of 7-deazaguanine (preQ1-tRNA) to give epoxyqueuosine (oQ-tRNA). This is S-adenosylmethionine:tRNA ribosyltransferase-isomerase from Shewanella sp. (strain MR-4).